The chain runs to 641 residues: SH2 domain-containing protein A (641 aa).

Positions Val-355–Arg-384 are disordered. An SH2 domain is found at Trp-547–Ile-641.

Phosphorylated on tyrosine residues. As to expression, expressed in roots, leaves, stems and flowers.

The polypeptide is SH2 domain-containing protein A (Arabidopsis thaliana (Mouse-ear cress)).